The chain runs to 183 residues: Ribosome-recycling factor (183 aa).

The protein belongs to the RRF family.

It localises to the cytoplasm. Functionally, responsible for the release of ribosomes from messenger RNA at the termination of protein biosynthesis. May increase the efficiency of translation by recycling ribosomes from one round of translation to another. In Ureaplasma parvum serovar 3 (strain ATCC 27815 / 27 / NCTC 11736), this protein is Ribosome-recycling factor.